Consider the following 128-residue polypeptide: Fluoride-specific ion channel FluC (128 aa).

The next 4 membrane-spanning stretches (helical) occupy residues Phe-3–Thr-23, Leu-34–Leu-54, Ile-65–Phe-85, and Phe-102–Ile-122. Residues Gly-77 and Thr-80 each contribute to the Na(+) site.

It belongs to the fluoride channel Fluc/FEX (TC 1.A.43) family.

The protein resides in the cell inner membrane. It carries out the reaction fluoride(in) = fluoride(out). With respect to regulation, na(+) is not transported, but it plays an essential structural role and its presence is essential for fluoride channel function. Fluoride-specific ion channel. Important for reducing fluoride concentration in the cell, thus reducing its toxicity. This chain is Fluoride-specific ion channel FluC, found in Campylobacter fetus subsp. fetus (strain 82-40).